Here is a 166-residue protein sequence, read N- to C-terminus: Mitochondrial inner membrane protease subunit 1 (166 aa).

Residues S40 and K83 contribute to the active site.

The protein belongs to the peptidase S26 family. IMP1 subfamily. Heterodimer of 2 subunits, IMMPL1 and IMMPL2.

It localises to the mitochondrion inner membrane. Catalyzes the removal of transit peptides required for the targeting of proteins from the mitochondrial matrix, across the inner membrane, into the inter-membrane space. Known to process the nuclear encoded protein DIABLO. This chain is Mitochondrial inner membrane protease subunit 1 (IMMP1L), found in Homo sapiens (Human).